The primary structure comprises 305 residues: RNA-binding protein with serine-rich domain 1 (305 aa).

A compositionally biased stretch (basic residues) spans 1–10; it reads MDLSGVKKKS. Residues 1–161 form a necessary for interaction with SRP54, nuclear localization and exon-skipping region; the sequence is MDLSGVKKKS…KRRSPSPKPT (161 aa). Residues 1 to 170 are disordered; that stretch reads MDLSGVKKKS…TKVHIGRLTR (170 aa). Residues 1–220 form a necessary for interaction with the cleaved p110 isoform of CDC2L1 region; sequence MDLSGVKKKS…ENPDEAEKAL (220 aa). Glycyl lysine isopeptide (Lys-Gly) (interchain with G-Cter in SUMO2) cross-links involve residues lysine 7 and lysine 15. Over residues 33 to 59 the composition is skewed to basic and acidic residues; it reads DRSDEKSKDRSKDKGATKESSEKDRGR. Phosphoserine; by CK2 is present on serine 53. The segment covering 68-126 has biased composition (low complexity); sequence ASSGSSSTRSRSSSTSSSGSSTSTGSSSGSSSSSASSRSGSSSTSRSSSSSSSSGSPSP. The segment at 69-121 is necessary for interactions with UPF2 and UPF3B and UPF2-dependent NMD; it reads SSGSSSTRSRSSSTSSSGSSTSTGSSSGSSSSSASSRSGSSSTSRSSSSSSSS. 2 stretches are compositionally biased toward basic residues: residues 127–143 and 151–167; these read SRRR…KSKP and RKRR…HIGR. Serine 155 and serine 157 each carry phosphoserine. Positions 156–242 are necessary for interaction with PNN and exon-skipping; sequence PSPKPTKVHI…ITATAVLAPW (87 aa). The interaction with SAP18 and ACIN1 stretch occupies residues 159–244; the sequence is KPTKVHIGRL…ATAVLAPWPR (86 aa). Phosphothreonine is present on threonine 161. In terms of domain architecture, RRM spans 161 to 240; that stretch reads TKVHIGRLTR…QEITATAVLA (80 aa). Lysine 218 carries the post-translational modification N6-acetyllysine. The interval 238–305 is necessary for interaction with TRA2B, nuclear localization and exon-skipping; it reads VLAPWPRPPP…RSRSSSNSSR (68 aa). Residues 240-305 are disordered; that stretch reads APWPRPPPRR…RSRSSSNSSR (66 aa). Positions 242–262 are enriched in pro residues; the sequence is WPRPPPRRFSPPRRMLPPPPM. The span at 266 to 298 shows a compositional bias: basic residues; the sequence is SPPRMRRRSRSPRRRSPVRRRSRSPGRRRHRSR.

The protein belongs to the splicing factor SR family. Found in mRNA splicing-dependent exon junction complexes (EJC). Found in a post-splicing complex with NXF1, RBM8A, UPF1, UPF2, UPF3A, UPF3B and RNPS1. Component of the heterotrimeric ASAP (apoptosis- and splicing-associated protein) and PSAP complexes consisting of RNPS1, SAP18 and either ACIN1 or PNN, respectively; the ASAP and PSAP complexes probably are formed mutually exclusive. Component of the active spliceosome. Associates with polysomes. Interacts with the cleaved p110 isoform of CDC2L1, CSNK2A1, PNN, SART3, SRP54, SRRM1 and TRA2B/SFRS10. Phosphorylated on one or more of the four Ser/Thr residues (Ser-43, Thr-49, Ser-52 or Ser-53). Ser-53 phosphorylation site is important for splicing and translation stimulation activity in vitro. Ubiquitous.

Its subcellular location is the nucleus. The protein localises to the nucleus speckle. It is found in the cytoplasm. Part of pre- and post-splicing multiprotein mRNP complexes. Auxiliary component of the splicing-dependent multiprotein exon junction complex (EJC) deposited at splice junction on mRNAs. The EJC is a dynamic structure consisting of core proteins and several peripheral nuclear and cytoplasmic associated factors that join the complex only transiently either during EJC assembly or during subsequent mRNA metabolism. Component of the ASAP and PSAP complexes which bind RNA in a sequence-independent manner and are proposed to be recruited to the EJC prior to or during the splicing process and to regulate specific excision of introns in specific transcription subsets. The ASAP complex can inhibit RNA processing during in vitro splicing reactions. The ASAP complex promotes apoptosis and is disassembled after induction of apoptosis. Enhances the formation of the ATP-dependent A complex of the spliceosome. Involved in both constitutive splicing and, in association with SRP54 and TRA2B/SFRS10, in distinctive modulation of alternative splicing in a substrate-dependent manner. Involved in the splicing modulation of BCL2L1/Bcl-X (and probably other apoptotic genes); specifically inhibits formation of proapoptotic isoforms such as Bcl-X(S); the activity is different from the established EJC assembly and function. Participates in mRNA 3'-end cleavage. Involved in UPF2-dependent nonsense-mediated decay (NMD) of mRNAs containing premature stop codons. Also mediates increase of mRNA abundance and translational efficiency. Binds spliced mRNA 20-25 nt upstream of exon-exon junctions. This chain is RNA-binding protein with serine-rich domain 1 (RNPS1), found in Homo sapiens (Human).